Consider the following 248-residue polypeptide: NAD(P)H-quinone oxidoreductase subunit K (248 aa).

[4Fe-4S] cluster-binding residues include Cys-66, Cys-67, Cys-131, and Cys-162.

The protein belongs to the complex I 20 kDa subunit family. In terms of assembly, NDH-1 can be composed of about 15 different subunits; different subcomplexes with different compositions have been identified which probably have different functions. It depends on [4Fe-4S] cluster as a cofactor.

The protein localises to the cellular thylakoid membrane. The catalysed reaction is a plastoquinone + NADH + (n+1) H(+)(in) = a plastoquinol + NAD(+) + n H(+)(out). It catalyses the reaction a plastoquinone + NADPH + (n+1) H(+)(in) = a plastoquinol + NADP(+) + n H(+)(out). Its function is as follows. NDH-1 shuttles electrons from an unknown electron donor, via FMN and iron-sulfur (Fe-S) centers, to quinones in the respiratory and/or the photosynthetic chain. The immediate electron acceptor for the enzyme in this species is believed to be plastoquinone. Couples the redox reaction to proton translocation, and thus conserves the redox energy in a proton gradient. Cyanobacterial NDH-1 also plays a role in inorganic carbon-concentration. The chain is NAD(P)H-quinone oxidoreductase subunit K from Synechococcus sp. (strain WH7803).